The primary structure comprises 399 residues: Leu/Ile/Val-binding protein homolog 7 (399 aa).

Positions 1–22 (MEKHLIALSVAALLAGAAPASA) are cleaved as a signal peptide.

This sequence belongs to the leucine-binding protein family.

Its function is as follows. Component of an amino-acid transport system. The protein is Leu/Ile/Val-binding protein homolog 7 of Brucella suis biovar 1 (strain 1330).